The chain runs to 563 residues: Zinc finger protein 503 (563 aa).

Residues 1 to 10 (MITSPSASRN) show a composition bias toward polar residues. 2 disordered regions span residues 1 to 48 (MITS…PLRQ) and 101 to 226 (SQIG…TSVS). Low complexity-rich tracts occupy residues 19 to 33 (SSSS…AVAS) and 112 to 122 (SKLSSVTSNGS). The segment covering 174–194 (ATCQPFTPRTGSPNSSTSASP) has biased composition (polar residues). Positions 199-211 (GKGERDEKKDSDC) are enriched in basic and acidic residues. Over residues 212–226 (NKNCSSDGSAPTSVS) the composition is skewed to polar residues. Residues 431-459 (HVCNWVSANGPCDKRFSSSEELLNHLRTH) form a C2H2-type zinc finger.

The protein belongs to the Elbow/Noc family. Interacts with nlz1.

The protein localises to the nucleus. Functionally, required for segmental gene expression during hindbrain development. May function as a transcriptional repressor. This is Zinc finger protein 503 (znf503) from Danio rerio (Zebrafish).